The sequence spans 138 residues: ATP synthase epsilon chain (138 aa).

This sequence belongs to the ATPase epsilon chain family. F-type ATPases have 2 components, CF(1) - the catalytic core - and CF(0) - the membrane proton channel. CF(1) has five subunits: alpha(3), beta(3), gamma(1), delta(1), epsilon(1). CF(0) has three main subunits: a, b and c.

It is found in the cell inner membrane. Its function is as follows. Produces ATP from ADP in the presence of a proton gradient across the membrane. The polypeptide is ATP synthase epsilon chain (Ruthia magnifica subsp. Calyptogena magnifica).